The chain runs to 77 residues: Acyl carrier protein (77 aa).

A Carrier domain is found at 2-77 (SNIEERVRNI…SAIDYVVNNG (76 aa)). Serine 37 is subject to O-(pantetheine 4'-phosphoryl)serine.

It belongs to the acyl carrier protein (ACP) family. 4'-phosphopantetheine is transferred from CoA to a specific serine of apo-ACP by AcpS. This modification is essential for activity because fatty acids are bound in thioester linkage to the sulfhydryl of the prosthetic group.

The protein localises to the cytoplasm. It functions in the pathway lipid metabolism; fatty acid biosynthesis. Functionally, carrier of the growing fatty acid chain in fatty acid biosynthesis. The protein is Acyl carrier protein of Psychromonas ingrahamii (strain DSM 17664 / CCUG 51855 / 37).